The sequence spans 116 residues: Putative pterin-4-alpha-carbinolamine dehydratase (116 aa).

This sequence belongs to the pterin-4-alpha-carbinolamine dehydratase family.

It carries out the reaction (4aS,6R)-4a-hydroxy-L-erythro-5,6,7,8-tetrahydrobiopterin = (6R)-L-erythro-6,7-dihydrobiopterin + H2O. This is Putative pterin-4-alpha-carbinolamine dehydratase from Xylella fastidiosa (strain M23).